A 441-amino-acid chain; its full sequence is GVGFKAGVKDYRLTYYTPEYKTKDTDILAAFRMTPQPGVPAEERGAAVAAESSTGTWTTVQTDGLTSLDRYKGRCYDIEPVAGEENQYIAYVAYPLDLFEEGSVTNMLTSIVGNVFGFKALRALXXEDLRIPPAYSKTFIGPPHGIQVERDKLNKYGRPLLGCTIKPKLGLSAKNYGRAVYECLRGGLDFTKDDENVNSQPFMRWRDRFLFVAEALFKSQAETGEIKGHYLNATAGTCEEMMKRAVFARELGVPIVMHDYLTGGFTANTSLAFYCRDNGLLLHIHRAMHAVIDRPRNHGIHFRVLAKALRMSGGDHIHAGTVVGKLEGEREVTLGFVDLLRDDYIEKDRSRGIYFTQDWVSMPGVLPVASGGIHVWHMPALTEIFGDDSVLQFGGGTLGHPWGNAPGAVANRVALEACVQARNEGRDLAREGNEIIREASK.

Lys-5 bears the N6,N6,N6-trimethyllysine mark. Residues Asn-114 and Thr-164 each contribute to the substrate site. The active-site Proton acceptor is the Lys-166. Position 168 (Lys-168) interacts with substrate. The Mg(2+) site is built by Lys-192, Asp-194, and Glu-195. N6-carboxylysine is present on Lys-192. The Proton acceptor role is filled by His-285. Residues Arg-286, His-318, and Ser-370 each coordinate substrate.

It belongs to the RuBisCO large chain family. Type I subfamily. Heterohexadecamer of 8 large chains and 8 small chains; disulfide-linked. The disulfide link is formed within the large subunit homodimers. It depends on Mg(2+) as a cofactor. The disulfide bond which can form in the large chain dimeric partners within the hexadecamer appears to be associated with oxidative stress and protein turnover.

It is found in the plastid. The protein localises to the chloroplast. It catalyses the reaction 2 (2R)-3-phosphoglycerate + 2 H(+) = D-ribulose 1,5-bisphosphate + CO2 + H2O. The enzyme catalyses D-ribulose 1,5-bisphosphate + O2 = 2-phosphoglycolate + (2R)-3-phosphoglycerate + 2 H(+). In terms of biological role, ruBisCO catalyzes two reactions: the carboxylation of D-ribulose 1,5-bisphosphate, the primary event in carbon dioxide fixation, as well as the oxidative fragmentation of the pentose substrate in the photorespiration process. Both reactions occur simultaneously and in competition at the same active site. This chain is Ribulose bisphosphate carboxylase large chain, found in Argyrochosma delicatula (Delicate cloak fern).